The chain runs to 280 residues: Feruloyl esterase 1 (280 aa).

Positions Met1–Ala20 are cleaved as a signal peptide. 3 disulfides stabilise this stretch: Cys49–Cys278, Cys111–Cys114, and Cys247–Cys254. A glycan (N-linked (GlcNAc...) asparagine) is linked at Asn99. The active-site Nucleophile is the Ser153. The active-site Charge relay system is Asp214. His267 functions as the Charge relay system in the catalytic mechanism.

The protein belongs to the AB hydrolase superfamily. FaeA family. Glycosylated.

The protein resides in the secreted. The catalysed reaction is feruloyl-polysaccharide + H2O = ferulate + polysaccharide.. With respect to regulation, metal or basic ions Mn(2+), Ni(+), Mg(2+), and NH(4)(+) decrease the activity by 4.4% to 14.1%. The enzymatic activity is inhibited by Zn(2+) at a low concentration (1 mM) but not a high concentration (5 mM). Loses about a quarter of activity by the addition of 1 mM of Cu(2+) or Fe(3+) and activity is completely suppressed when the concentration was up to 5 mM. Low concentrations (0.25 and 0.5 M) of NaCl improve the activity by 5.6 % or 8.3%, respectively. Its function is as follows. Involved in degradation of plant cell walls. Hydrolyzes the feruloyl-arabinose ester bond in arabinoxylans, and the feruloyl-galactose ester bond in pectin. The polypeptide is Feruloyl esterase 1 (Penicillium parvum (Eupenicillium parvum)).